A 627-amino-acid polypeptide reads, in one-letter code: Interferon-induced GTP-binding protein MxB (627 aa).

The Dynamin-type G domain occupies 34 to 307; that stretch reads DLALPAIAVI…LVHHIQRSLP (274 aa). The tract at residues 44–51 is G1 motif; that stretch reads GDQSSGKS. 44-51 contributes to the GTP binding site; sequence GDQSSGKS. Residues 69 to 71 form a G2 motif region; sequence VTR. The tract at residues 145 to 148 is G3 motif; sequence DLPG. GTP contacts are provided by residues 145-149 and 214-217; these read DLPGI and TKPD. A G4 motif region spans residues 214-217; that stretch reads TKPD. The G5 motif stretch occupies residues 246-249; that stretch reads RCRG. The GED domain maps to 541–627; the sequence is LSEMKLHLES…MKAQNLLATY (87 aa).

Belongs to the TRAFAC class dynamin-like GTPase superfamily. Dynamin/Fzo/YdjA family.

The protein resides in the cytoplasm. This Danio rerio (Zebrafish) protein is Interferon-induced GTP-binding protein MxB (mxb).